The following is a 29-amino-acid chain: Cyclotide mobo-B (29 aa).

Positions 1–29 (GKPICGETCAKGKCYTPKCTCNWPICYKN) form a cross-link, cyclopeptide (Gly-Asn). Disulfide bonds link Cys-5-Cys-19, Cys-9-Cys-21, and Cys-14-Cys-26.

This sequence belongs to the cyclotide family. This is a cyclic peptide.

Functionally, probably participates in a plant defense mechanism. This is Cyclotide mobo-B from Melicytus obovatus (Hymenanthera obovata).